We begin with the raw amino-acid sequence, 506 residues long: Protein EFFECTOR OF TRANSCRIPTION 1 (506 aa).

The 41-residue stretch at 185–225 (AFQGLYELSHDHGRKDDVLVANLGQPESIRSRLRSYSRSFA) folds into the GIY-YIG domain. The span at 234 to 247 (LSQTILPTTQNKSD) shows a compositional bias: polar residues. Residues 234–298 (LSQTILPTTQ…VSEKHDDIVD (65 aa)) are disordered. Residues 248-272 (NQTEEKKSDSEEEREVSSDAAEKES) show a composition bias toward basic and acidic residues. Residues 273–288 (NSLPSILRLSRSRPQP) show a composition bias toward low complexity. 2 Cx9Cx9RCx2HK repeats span residues 306 to 331 (CGVL…TEHK) and 361 to 386 (CGVI…EDHK). Positions 404-413 (KAVNEDKSKP) are enriched in basic and acidic residues. Positions 404-426 (KAVNEDKSKPETSTGMNQEGSGL) are disordered. The segment covering 414–423 (ETSTGMNQEG) has biased composition (polar residues). 2 Cx9Cx9RCx2HK repeats span residues 428 to 453 (CEAT…WQHK) and 475 to 500 (CGFK…EEHK).

As to expression, expressed in rosette leaves, stipules, stems, flowers, siliques and mature seeds. Expressed in the vascular bundles of xylem in shoot parenchyma cells. Expressed in the remnant cytoplasm of differentiated fiber cells and in protoxylem element of parenchymal cells.

It localises to the cytoplasm. It is found in the nucleus. Transcriptional regulator involved in the regulation of cell differentiation in meristems. Binds DNA without sequence preference. The chain is Protein EFFECTOR OF TRANSCRIPTION 1 from Arabidopsis thaliana (Mouse-ear cress).